Consider the following 339-residue polypeptide: Uroporphyrinogen decarboxylase (339 aa).

Substrate-binding positions include 21–25 (RQAGR), Asp-71, Tyr-147, Ser-202, and His-315.

This sequence belongs to the uroporphyrinogen decarboxylase family. Homodimer.

The protein resides in the cytoplasm. It carries out the reaction uroporphyrinogen III + 4 H(+) = coproporphyrinogen III + 4 CO2. The protein operates within porphyrin-containing compound metabolism; protoporphyrin-IX biosynthesis; coproporphyrinogen-III from 5-aminolevulinate: step 4/4. Catalyzes the decarboxylation of four acetate groups of uroporphyrinogen-III to yield coproporphyrinogen-III. The chain is Uroporphyrinogen decarboxylase from Helicobacter pylori (strain P12).